We begin with the raw amino-acid sequence, 413 residues long: MAPPSIFAEVPQAQPVLVFKLTADFREDPDPRKVNLGVGAYRTDDSQPWVLPVVRKVEQRIANDSSINHEYLPILGLAEFRTCASRLALGDDSPALQEKRVGGVQCLGGTGALRIGAEFLARWYNGTNNKDTPVYVSSPTWENHNGVFIAAGFKDIRSYHYWDAAKRGLDLQGFLNDLEKAPEFSIFVLHACAHNPTGTDPTPEQWKQIASVMKRRFLFPFFDSAYQGFASGSLEKDAWAIRYFVSEGFELFCAQSFSKNFGLYNERVGNLTVVAKEPDSILRVLSQMEKIVRITWSNPPAQGARIVARTLSDPELFNEWTGNVKTMADRILTMRSELRARLEALKTPGTWNHITEQIGMFSFTGLNPKQVEYLINEKHIYLLPSGRINMCGLTTKNLEYVATSIHEAVTKIQ.

Residues Gly39, Trp141, and Asn195 each coordinate L-aspartate. Lys259 bears the N6-(pyridoxal phosphate)lysine mark. Arg387 is a binding site for L-aspartate.

Belongs to the class-I pyridoxal-phosphate-dependent aminotransferase family. As to quaternary structure, homodimer. The cofactor is pyridoxal 5'-phosphate.

It localises to the cytoplasm. It carries out the reaction L-aspartate + 2-oxoglutarate = oxaloacetate + L-glutamate. It catalyses the reaction L-cysteine + 2-oxoglutarate = 2-oxo-3-sulfanylpropanoate + L-glutamate. The catalysed reaction is (2S)-2-aminobutanoate + 2-oxoglutarate = 2-oxobutanoate + L-glutamate. The enzyme catalyses 3-sulfino-L-alanine + 2-oxoglutarate = 3-sulfinopyruvate + L-glutamate. Functionally, biosynthesis of L-glutamate from L-aspartate or L-cysteine. Important regulator of levels of glutamate, the major excitatory neurotransmitter of the vertebrate central nervous system. Acts as a scavenger of glutamate in brain neuroprotection. The aspartate aminotransferase activity is involved in hepatic glucose synthesis during development and in adipocyte glyceroneogenesis. Using L-cysteine as substrate, regulates levels of mercaptopyruvate, an important source of hydrogen sulfide. Mercaptopyruvate is converted into H(2)S via the action of 3-mercaptopyruvate sulfurtransferase (3MST). Hydrogen sulfide is an important synaptic modulator and neuroprotectant in the brain. This Bos taurus (Bovine) protein is Aspartate aminotransferase, cytoplasmic.